The primary structure comprises 205 residues: Cytochrome c oxidase subunit 3 (205 aa).

5 helical membrane passes run 28–48 (GTIV…AMYF), 72–92 (ALVI…GVFA), 104–124 (WFSL…YEYF), 142–162 (FFIT…AFVV), and 184–204 (SYYW…IYFI).

This sequence belongs to the cytochrome c oxidase subunit 3 family. Associates with subunits I, II and IV to form cytochrome c oxidase.

The protein resides in the cell membrane. It carries out the reaction 4 Fe(II)-[cytochrome c] + O2 + 8 H(+)(in) = 4 Fe(III)-[cytochrome c] + 2 H2O + 4 H(+)(out). The sequence is that of Cytochrome c oxidase subunit 3 (ctaE) from Corynebacterium diphtheriae (strain ATCC 700971 / NCTC 13129 / Biotype gravis).